Reading from the N-terminus, the 213-residue chain is Outer-membrane lipoprotein LolB (213 aa).

The first 24 residues, 1-24 (MNNLSYFTKTKLVWVILSLSLLSA), serve as a signal peptide directing secretion. Cysteine 25 is lipidated: N-palmitoyl cysteine. Cysteine 25 carries the S-diacylglycerol cysteine lipid modification.

The protein belongs to the LolB family. Monomer.

The protein localises to the cell outer membrane. Plays a critical role in the incorporation of lipoproteins in the outer membrane after they are released by the LolA protein. This is Outer-membrane lipoprotein LolB from Shewanella woodyi (strain ATCC 51908 / MS32).